The chain runs to 927 residues: Valine--tRNA ligase (927 aa).

The 'HIGH' region signature appears at 45–55; that stretch reads PNVTGSLHMGH. The short motif at 571–575 is the 'KMSKS' region element; that stretch reads KMSKS. An ATP-binding site is contributed by Lys574. Positions 856–917 form a coiled coil; sequence SLIDLAAEAA…EYRDAQDKLA (62 aa).

It belongs to the class-I aminoacyl-tRNA synthetase family. ValS type 1 subfamily. Monomer.

It is found in the cytoplasm. The enzyme catalyses tRNA(Val) + L-valine + ATP = L-valyl-tRNA(Val) + AMP + diphosphate. In terms of biological role, catalyzes the attachment of valine to tRNA(Val). As ValRS can inadvertently accommodate and process structurally similar amino acids such as threonine, to avoid such errors, it has a 'posttransfer' editing activity that hydrolyzes mischarged Thr-tRNA(Val) in a tRNA-dependent manner. In Mesorhizobium japonicum (strain LMG 29417 / CECT 9101 / MAFF 303099) (Mesorhizobium loti (strain MAFF 303099)), this protein is Valine--tRNA ligase.